We begin with the raw amino-acid sequence, 129 residues long: Large ribosomal subunit protein bL17 (129 aa).

Belongs to the bacterial ribosomal protein bL17 family. As to quaternary structure, part of the 50S ribosomal subunit. Contacts protein L32.

The protein is Large ribosomal subunit protein bL17 of Serratia proteamaculans (strain 568).